The primary structure comprises 558 residues: Hsp70-Hsp90 organizing protein 3 (558 aa).

TPR repeat units follow at residues 2-35 (AEEA…SPTN), 37-69 (ILYS…KPDW), 70-103 (SKGY…DPSN), and 136-173 (EKLT…YMKD). Residues 131–170 (GKEMWEKLTADPGTRVYLEQDDFVKTMKEIQRNPNNLNLY) form the STI1 1 domain. Residues 191-232 (SSGEDTEMKEADERKEPEPEMEPMELTEEERQKKERKEKALK) are disordered. Over residues 196–208 (TEMKEADERKEPE) the composition is skewed to basic and acidic residues. Residues 209-218 (PEMEPMELTE) are compositionally biased toward acidic residues. Basic and acidic residues predominate over residues 219-232 (EERQKKERKEKALK). The Bipartite nuclear localization signal motif lies at 227 to 244 (KEKALKEKGEGNVAYKKK). TPR repeat units lie at residues 230–263 (ALKE…DDED), 265–297 (SYLT…GREL), 305–342 (ARAL…HRNP), 369–402 (AEEE…NPND), 404–436 (RAYS…DPSF), and 437–470 (TKGY…DPKN). One can recognise an STI1 2 domain in the interval 507-546 (DPEVQNILSDPVMRQVLVDFQENPKAAQEHMKNPMVMNKI).

In terms of assembly, co-chaperone that forms a complex with HSP70 and HSP90 and preproteins (e.g. chloroplast preproteins). Phosphorylated. In terms of processing, acetylated.

The protein resides in the cytoplasm. Its subcellular location is the nucleus. Functionally, mediates the association of the molecular chaperones HSP70 and HSP90. Mediates nuclear encoded chloroplast preproteins binding to HSP90 prior to chloroplastic sorting. Involved in acclimation to heat. This is Hsp70-Hsp90 organizing protein 3 (HOP3) from Arabidopsis thaliana (Mouse-ear cress).